A 535-amino-acid chain; its full sequence is Light-independent protochlorophyllide reductase subunit B (535 aa).

Residue D36 coordinates [4Fe-4S] cluster. Catalysis depends on D292, which acts as the Proton donor. Residue 428 to 429 participates in substrate binding; sequence GL.

This sequence belongs to the ChlB/BchB/BchZ family. Protochlorophyllide reductase is composed of three subunits; BchL, BchN and BchB. Forms a heterotetramer of two BchB and two BchN subunits. Requires [4Fe-4S] cluster as cofactor.

It catalyses the reaction chlorophyllide a + oxidized 2[4Fe-4S]-[ferredoxin] + 2 ADP + 2 phosphate = protochlorophyllide a + reduced 2[4Fe-4S]-[ferredoxin] + 2 ATP + 2 H2O. The protein operates within porphyrin-containing compound metabolism; bacteriochlorophyll biosynthesis (light-independent). Functionally, component of the dark-operative protochlorophyllide reductase (DPOR) that uses Mg-ATP and reduced ferredoxin to reduce ring D of protochlorophyllide (Pchlide) to form chlorophyllide a (Chlide). This reaction is light-independent. The NB-protein (BchN-BchB) is the catalytic component of the complex. The polypeptide is Light-independent protochlorophyllide reductase subunit B (Pelodictyon phaeoclathratiforme (strain DSM 5477 / BU-1)).